The primary structure comprises 446 residues: Tubulin beta chain (446 aa).

Gln-11, Glu-69, Ser-138, Gly-142, Thr-143, Gly-144, Asn-204, and Asn-226 together coordinate GTP. Position 69 (Glu-69) interacts with Mg(2+). Residues 427–446 are disordered; it reads EAGVDEGEEFEEEEDFGDEQ. Residues 429-446 show a composition bias toward acidic residues; the sequence is GVDEGEEFEEEEDFGDEQ.

The protein belongs to the tubulin family. In terms of assembly, dimer of alpha and beta chains. A typical microtubule is a hollow water-filled tube with an outer diameter of 25 nm and an inner diameter of 15 nM. Alpha-beta heterodimers associate head-to-tail to form protofilaments running lengthwise along the microtubule wall with the beta-tubulin subunit facing the microtubule plus end conferring a structural polarity. Microtubules usually have 13 protofilaments but different protofilament numbers can be found in some organisms and specialized cells. Mg(2+) is required as a cofactor.

The protein resides in the cytoplasm. It localises to the cytoskeleton. In terms of biological role, tubulin is the major constituent of microtubules, a cylinder consisting of laterally associated linear protofilaments composed of alpha- and beta-tubulin heterodimers. Microtubules grow by the addition of GTP-tubulin dimers to the microtubule end, where a stabilizing cap forms. Below the cap, tubulin dimers are in GDP-bound state, owing to GTPase activity of alpha-tubulin. This is Tubulin beta chain from Giardia intestinalis (Giardia lamblia).